Consider the following 126-residue polypeptide: Large ribosomal subunit protein bL12 (126 aa).

Belongs to the bacterial ribosomal protein bL12 family. Homodimer. Part of the ribosomal stalk of the 50S ribosomal subunit. Forms a multimeric L10(L12)X complex, where L10 forms an elongated spine to which 2 to 4 L12 dimers bind in a sequential fashion. Binds GTP-bound translation factors.

Functionally, forms part of the ribosomal stalk which helps the ribosome interact with GTP-bound translation factors. Is thus essential for accurate translation. This chain is Large ribosomal subunit protein bL12, found in Bifidobacterium longum subsp. infantis (strain ATCC 15697 / DSM 20088 / JCM 1222 / NCTC 11817 / S12).